The following is a 604-amino-acid chain: Glucose-methanol-choline family oxidoreductase mfmG (604 aa).

Residues Met-1–Ala-24 form the signal peptide. Residue Asn-32 is glycosylated (N-linked (GlcNAc...) asparagine). Residues Thr-44–Ala-45 and Glu-65–Ala-66 each bind FAD. Asn-76 and Asn-97 each carry an N-linked (GlcNAc...) asparagine glycan. Asn-126 to Ala-129 is an FAD binding site. Residues Asn-260, Asn-265, Asn-401, and Asn-460 are each glycosylated (N-linked (GlcNAc...) asparagine). The active-site Proton acceptor is His-538. Residues Ala-572 and Pro-584–Gln-585 contribute to the FAD site.

It belongs to the GMC oxidoreductase family. Homodimer. FAD serves as cofactor.

Oxidoreductase; part of the gene cluster that mediates the biosynthesis of the phthalide-terpenoid hybrid 11'-O-desmethylfendlerol. MfmG seems not to be involved directly in the biosynthesis of 11'-O-desmethylfendlerol and its role has still to be determined. The biosynthesis of 11'-O-desmethylfendlerol begins with the NR-PKS mfmB that forms 3,5-dimethylorsellinic acid (DMOA), which is then transformed into the phthalide 5,7-dihydroxy-4-(hydroxymethyl)-6-methylphthalide by the cytochrome P450 monooxygenase mfmA and the hydrolase mfmC. Subsequently, the methyltransferase mfmE catalyzes 7-O-methylation to yield 5-hydroxy-4-(hydroxymethyl)-7-methoxy-6-methylphthalide, which undergoes C-3 hydroxylation by the cytochrome P450 monooxygenase mfmF. The resultant cyclopolic acid (2,5-dihydroxy-4-(hydroxymethyl)-7-methoxy-6-methylphthalide) is then farnesylated by the DMATS-type prenyltransferase mfmD to afford 5-O-farnesylcyclopolic acid. Finally, the Pyr4-family terpene cyclase mfmH cyclizes the farnesyl moiety of 5-O-farnesylcyclopolic acid into a drimane-like structure, thus completing the biosynthesis of 11'-O-desmethylfendlerol. The chain is Glucose-methanol-choline family oxidoreductase mfmG from Annulohypoxylon moriforme (Filamentous fungus).